Reading from the N-terminus, the 212-residue chain is Thiamine-phosphate synthase (212 aa).

4-amino-2-methyl-5-(diphosphooxymethyl)pyrimidine-binding positions include 35–39 and N67; that span reads QLRRK. Mg(2+) is bound by residues D68 and D87. S106 serves as a coordination point for 4-amino-2-methyl-5-(diphosphooxymethyl)pyrimidine. 132–134 provides a ligand contact to 2-[(2R,5Z)-2-carboxy-4-methylthiazol-5(2H)-ylidene]ethyl phosphate; it reads TGS. K135 provides a ligand contact to 4-amino-2-methyl-5-(diphosphooxymethyl)pyrimidine. Residues G163 and 183-184 each bind 2-[(2R,5Z)-2-carboxy-4-methylthiazol-5(2H)-ylidene]ethyl phosphate; that span reads IS.

It belongs to the thiamine-phosphate synthase family. Requires Mg(2+) as cofactor.

It catalyses the reaction 2-[(2R,5Z)-2-carboxy-4-methylthiazol-5(2H)-ylidene]ethyl phosphate + 4-amino-2-methyl-5-(diphosphooxymethyl)pyrimidine + 2 H(+) = thiamine phosphate + CO2 + diphosphate. The catalysed reaction is 2-(2-carboxy-4-methylthiazol-5-yl)ethyl phosphate + 4-amino-2-methyl-5-(diphosphooxymethyl)pyrimidine + 2 H(+) = thiamine phosphate + CO2 + diphosphate. The enzyme catalyses 4-methyl-5-(2-phosphooxyethyl)-thiazole + 4-amino-2-methyl-5-(diphosphooxymethyl)pyrimidine + H(+) = thiamine phosphate + diphosphate. It participates in cofactor biosynthesis; thiamine diphosphate biosynthesis; thiamine phosphate from 4-amino-2-methyl-5-diphosphomethylpyrimidine and 4-methyl-5-(2-phosphoethyl)-thiazole: step 1/1. Condenses 4-methyl-5-(beta-hydroxyethyl)thiazole monophosphate (THZ-P) and 2-methyl-4-amino-5-hydroxymethyl pyrimidine pyrophosphate (HMP-PP) to form thiamine monophosphate (TMP). The chain is Thiamine-phosphate synthase from Chlorobium luteolum (strain DSM 273 / BCRC 81028 / 2530) (Pelodictyon luteolum).